The primary structure comprises 421 residues: Enolase (421 aa).

Residue Glu207 is the Proton donor of the active site. Residues Asp244, Glu285, and Asp312 each coordinate Mg(2+). Lys337 acts as the Proton acceptor in catalysis. (2R)-2-phosphoglycerate-binding residues include Lys337, Arg366, Ser367, and Lys388.

The protein belongs to the enolase family. It depends on Mg(2+) as a cofactor.

It is found in the cytoplasm. It localises to the secreted. Its subcellular location is the cell surface. The catalysed reaction is (2R)-2-phosphoglycerate = phosphoenolpyruvate + H2O. It participates in carbohydrate degradation; glycolysis; pyruvate from D-glyceraldehyde 3-phosphate: step 4/5. Its function is as follows. Catalyzes the reversible conversion of 2-phosphoglycerate (2-PG) into phosphoenolpyruvate (PEP). It is essential for the degradation of carbohydrates via glycolysis. The chain is Enolase from Ehrlichia ruminantium (strain Gardel).